Reading from the N-terminus, the 65-residue chain is Pancreatic polypeptide prohormone (65 aa).

Tyr36 carries the tyrosine amide modification. Positions Glu59–Ala65 are excised as a propeptide.

Belongs to the NPY family.

It is found in the secreted. Its function is as follows. Hormone secreted by pancreatic cells that acts as a regulator of pancreatic and gastrointestinal functions probably by signaling through the G protein-coupled receptor NPY4R2. The protein is Pancreatic polypeptide prohormone (PPY) of Sus scrofa (Pig).